We begin with the raw amino-acid sequence, 880 residues long: Potassium/sodium hyperpolarization-activated cyclic nucleotide-gated channel 1 (880 aa).

Residues 1–80 (MEGGGKPNSS…SAGGLEDAEG (80 aa)) are disordered. Over 1–136 (MEGGGKPNSS…WIIHSYSDFR (136 aa)) the chain is Cytoplasmic. Residues 8–34 (NSSSNSRDDGNSVFPAKAPATGAGPAA) are compositionally biased toward low complexity. The span at 62–71 (DGGGGGGEES) shows a compositional bias: gly residues. A helical membrane pass occupies residues 137 to 158 (FYWDLIMLIMMVGNLVIIPVGI). Residues 159-167 (TFFTEQTTT) are Extracellular-facing. Residues 168-188 (PWIIFNVASDTVFLLDLIMNF) traverse the membrane as a helical segment. Residues 189–209 (RTGTVNEDSSEIILDPKVIKM) are Cytoplasmic-facing. Residues 210–230 (NYLKSWFVVDFISSIPVDYIF) traverse the membrane as a helical segment. Residues 231-254 (LIVEKGMDSEVYKTARALRIVRFT) lie on the Extracellular side of the membrane. The helical; Voltage-sensor transmembrane segment at 255–275 (KILSLLRLLRLSRLIRYIHQW) threads the bilayer. At 276–289 (EEIFHMTYDLASAV) the chain is on the cytoplasmic side. A helical membrane pass occupies residues 290–312 (VRIFNLIGMMLLLCHWDGCLQFL). Residues 313–338 (VPLLQDFPPDCWVSLNEMVNDSWGKQ) lie on the Extracellular side of the membrane. A glycan (N-linked (GlcNAc...) asparagine) is linked at Asn332. An intramembrane region (pore-forming) is located at residues 339-360 (YSYALFKAMSHMLCIGYGAQAP). Residues 352 to 356 (CIGYG) carry the Selectivity filter motif. Over 361–365 (VSMSD) the chain is Extracellular. Residues 366-386 (LWITMLSMIVGATCYAMFVGH) traverse the membrane as a helical segment. Topologically, residues 387–880 (ATALIQSLDS…AEKPRFASNL (494 aa)) are cytoplasmic. 3',5'-cyclic AMP contacts are provided by Gly533, Glu534, Cys536, Arg543, Thr544, Arg584, and Arg587. Positions 641-664 (LNSTSSTATPTSRMRTQSPPVYTA) are enriched in polar residues. Disordered regions lie at residues 641-686 (LNST…QPSA), 718-786 (ASQL…LPHE), and 835-880 (MSSG…ASNL). Composition is skewed to low complexity over residues 665 to 685 (TSLSHSNLHSPSPSTQTPQPS) and 725 to 738 (PQQQQQPQAPQTQP). Residues 760–770 (STQALPNTSLT) are compositionally biased toward polar residues. A compositionally biased stretch (pro residues) spans 844 to 855 (RGVPPAPPPPAA). The segment covering 870 to 880 (EAEKPRFASNL) has biased composition (basic and acidic residues).

This sequence belongs to the potassium channel HCN family. In terms of assembly, homotetramer. Heterotetramer with HCN2. The potassium channel is composed of a homo- or heterotetrameric complex of pore-forming subunits. Interacts with KCNE2. Interacts with the SH3 domain of CSK. In terms of tissue distribution, detected in myocytes in heart sinoatrial node (SAN) and in brain, in particular in the granule cell layer and in Purkinje neuron bodies in the cerebellum.

The protein resides in the cell membrane. The enzyme catalyses Na(+)(in) = Na(+)(out). It carries out the reaction K(+)(in) = K(+)(out). Activated by cAMP. cAMP binding promotes tetramerization and formation of an active channel. Compared to other family members, cAMP has less stimulatory effect on HCN1 because part of the molecules already contain bound cAMP and form homotetramers when cAMP levels are low, this inherent tetramerization in HCN1 results in a weaker response to increased cAMP. In terms of biological role, hyperpolarization-activated ion channel that are permeable to sodium and potassium ions. Exhibits weak selectivity for potassium over sodium ions. Contributes to the native pacemaker currents in heart (If) and in neurons (Ih). Participates in cerebellar mechanisms of motor learning. May mediate responses to sour stimuli. The sequence is that of Potassium/sodium hyperpolarization-activated cyclic nucleotide-gated channel 1 (HCN1) from Oryctolagus cuniculus (Rabbit).